Here is a 505-residue protein sequence, read N- to C-terminus: Cytochrome P450 CYP71D313 (505 aa).

Residues 1–21 form a helical membrane-spanning segment; that stretch reads MELQFPLFSIFFVTILFFFLF. Cysteine 441 serves as a coordination point for heme. A helical membrane pass occupies residues 442–462; the sequence is PGIAFGIATIELPLALLLYHF.

The protein belongs to the cytochrome P450 family. Heme serves as cofactor.

It localises to the membrane. Functionally, probable heme-thiolate monooxygenase. This is Cytochrome P450 CYP71D313 from Panax ginseng (Korean ginseng).